Consider the following 338-residue polypeptide: DNA-directed RNA polymerase subunit alpha (338 aa).

The segment at 1 to 234 (MIHKNWAELI…DQLSIFVNFD (234 aa)) is alpha N-terminal domain (alpha-NTD). The alpha C-terminal domain (alpha-CTD) stretch occupies residues 250–338 (FNPLLLKKVD…DLAKKFEDAF (89 aa)).

This sequence belongs to the RNA polymerase alpha chain family. In terms of assembly, homodimer. The RNAP catalytic core consists of 2 alpha, 1 beta, 1 beta' and 1 omega subunit. When a sigma factor is associated with the core the holoenzyme is formed, which can initiate transcription.

It catalyses the reaction RNA(n) + a ribonucleoside 5'-triphosphate = RNA(n+1) + diphosphate. Functionally, DNA-dependent RNA polymerase catalyzes the transcription of DNA into RNA using the four ribonucleoside triphosphates as substrates. In Ruegeria pomeroyi (strain ATCC 700808 / DSM 15171 / DSS-3) (Silicibacter pomeroyi), this protein is DNA-directed RNA polymerase subunit alpha.